We begin with the raw amino-acid sequence, 1335 residues long: Probable serine/threonine-protein kinase ndrC (1335 aa).

Disordered stretches follow at residues 1–70 (MSRK…KKGS), 85–158 (VDTH…LIPS), 276–447 (LPPP…SPLN), and 462–603 (TTTT…NNNK). Polar residues predominate over residues 8-17 (NRSSSSNSIE). The span at 27-41 (SNISNSSNINCNNSS) shows a compositional bias: low complexity. The segment covering 55-70 (RSKHSSPIHSLKKKGS) has biased composition (basic residues). A compositionally biased stretch (low complexity) spans 89–117 (SSSNSNNNSSSNNNNNNNNHNINSSSESS). Residues 118–132 (TPTTPRSSFTPQVTM) are compositionally biased toward polar residues. Positions 133-153 (NSNQSSGNNSPQLSSRSSSQS) are enriched in low complexity. A compositionally biased stretch (pro residues) spans 276–288 (LPPPSQQQLPPPQ). Composition is skewed to low complexity over residues 289 to 331 (SHQQ…TPQS), 345 to 368 (NQQQ…SPNK), 382 to 396 (SPSP…SPSS), 412 to 424 (PTPL…SPSS), 437 to 447 (PSSFSGGSPLN), and 462 to 484 (TTTT…TTIS). Positions 485-497 (NPNYTQNLPTTPL) are enriched in polar residues. Positions 498-507 (SNSSSNNNNN) are enriched in low complexity. Over residues 508–528 (GSFITLQDTTNNKSIINNNRE) the composition is skewed to polar residues. The segment covering 540 to 566 (SSGSSNTTSSTTNTTTPSSSSLTTSSG) has biased composition (low complexity). Residues 567–581 (KESRDRDSKDKEKDL) are compositionally biased toward basic and acidic residues. Positions 586-602 (NNNNNNNNNNNNNNNNN) are enriched in low complexity. The stretch at 586-613 (NNNNNNNNNNNNNNNNNKVEKEKENYCK) forms a coiled coil. Positions 718 to 1019 (FKILTQIGKG…KQDFKNHPFF (302 aa)) constitute a Protein kinase domain. ATP-binding positions include 724-732 (IGKGGFGQV) and Lys747. Residue Asp840 is the Proton acceptor of the active site. The AGC-kinase C-terminal domain maps to 1020-1106 (KNHNWDEIVN…RKSSALSLSM (87 aa)). A compositionally biased stretch (low complexity) spans 1239–1284 (SQSQPSLANQLQSSSSSPSPSLQSQSQSPSLQSSSKSTPNLSSSLL). A disordered region spans residues 1239-1313 (SQSQPSLANQ…IKKENESEEI (75 aa)). Over residues 1287 to 1313 (PVKEELEYKNQTENEVEIKKENESEEI) the composition is skewed to basic and acidic residues. A coiled-coil region spans residues 1289-1325 (KEELEYKNQTENEVEIKKENESEEIQSLRDQLKEIII).

Belongs to the protein kinase superfamily. AGC Ser/Thr protein kinase family.

The enzyme catalyses L-seryl-[protein] + ATP = O-phospho-L-seryl-[protein] + ADP + H(+). It carries out the reaction L-threonyl-[protein] + ATP = O-phospho-L-threonyl-[protein] + ADP + H(+). The polypeptide is Probable serine/threonine-protein kinase ndrC (ndrC) (Dictyostelium discoideum (Social amoeba)).